The sequence spans 49 residues: Large ribosomal subunit protein bL33B (49 aa).

The protein belongs to the bacterial ribosomal protein bL33 family.

The protein is Large ribosomal subunit protein bL33B (rpmG2) of Lactococcus lactis subsp. lactis (strain IL1403) (Streptococcus lactis).